The following is a 284-amino-acid chain: 4-hydroxybenzoate octaprenyltransferase (284 aa).

Helical transmembrane passes span 33 to 53 (VIAA…LGVF), 93 to 113 (IGLF…MNPL), 136 to 156 (YLPQ…AWAA), 159 to 179 (GELP…TIAY), 209 to 229 (LVIG…GQHY), 231 to 248 (LGQS…LFVY), and 264 to 284 (AFLN…IAFW).

Belongs to the UbiA prenyltransferase family. Requires Mg(2+) as cofactor.

Its subcellular location is the cell inner membrane. The enzyme catalyses all-trans-octaprenyl diphosphate + 4-hydroxybenzoate = 4-hydroxy-3-(all-trans-octaprenyl)benzoate + diphosphate. Its pathway is cofactor biosynthesis; ubiquinone biosynthesis. Functionally, catalyzes the prenylation of para-hydroxybenzoate (PHB) with an all-trans polyprenyl group. Mediates the second step in the final reaction sequence of ubiquinone-8 (UQ-8) biosynthesis, which is the condensation of the polyisoprenoid side chain with PHB, generating the first membrane-bound Q intermediate 3-octaprenyl-4-hydroxybenzoate. This is 4-hydroxybenzoate octaprenyltransferase from Vibrio campbellii (strain ATCC BAA-1116).